The primary structure comprises 471 residues: Putative pentatricopeptide repeat-containing protein At1g53330 (471 aa).

PPR repeat units follow at residues 46–81 (SLLC…RIVP), 82–116 (TEII…RCQR), 117–147 (TVKS…IDEF), 151–185 (DACT…KVKP), 186–221 (TGVT…GVRP), 222–256 (TVHI…KIKV), 257–291 (DAAI…GCKP), 292–326 (DTVT…GLKP), 327–361 (DVIS…GCSP), and 362–396 (DTLS…GYKP).

It belongs to the PPR family. P subfamily.

Its function is as follows. Involved during embryo development. The chain is Putative pentatricopeptide repeat-containing protein At1g53330 from Arabidopsis thaliana (Mouse-ear cress).